The chain runs to 510 residues: Glutamate--tRNA ligase (510 aa).

The 'HIGH' region motif lies at 15-25 (PSPTGDPHVGT). The 'KMSKS' region signature appears at 256–260 (KISKR). K259 provides a ligand contact to ATP.

Belongs to the class-I aminoacyl-tRNA synthetase family. Glutamate--tRNA ligase type 1 subfamily. As to quaternary structure, monomer.

The protein localises to the cytoplasm. It carries out the reaction tRNA(Glu) + L-glutamate + ATP = L-glutamyl-tRNA(Glu) + AMP + diphosphate. Its function is as follows. Catalyzes the attachment of glutamate to tRNA(Glu) in a two-step reaction: glutamate is first activated by ATP to form Glu-AMP and then transferred to the acceptor end of tRNA(Glu). This is Glutamate--tRNA ligase from Fusobacterium nucleatum subsp. nucleatum (strain ATCC 25586 / DSM 15643 / BCRC 10681 / CIP 101130 / JCM 8532 / KCTC 2640 / LMG 13131 / VPI 4355).